Reading from the N-terminus, the 152-residue chain is Non-specific lipid transfer protein GPI-anchored 8 (152 aa).

A signal peptide spans 1–23; it reads MNITRILGVVTTVVILYSVQVTA. 3 cysteine pairs are disulfide-bonded: Cys-42/Cys-56, Cys-57/Cys-98, and Cys-70/Cys-107. N-linked (GlcNAc...) asparagine glycosylation occurs at Asn-108. A lipid anchor (GPI-anchor amidated serine) is attached at Ser-124. Positions 125–152 are cleaved as a propeptide — removed in mature form; the sequence is GNSFSTKKNTALAITFFGFSFVFLGMII.

This sequence belongs to the plant LTP family.

The protein localises to the cell membrane. Its function is as follows. Probable lipid transfer protein. This chain is Non-specific lipid transfer protein GPI-anchored 8, found in Arabidopsis thaliana (Mouse-ear cress).